Reading from the N-terminus, the 257-residue chain is Major prion protein (257 aa).

A signal peptide spans 1 to 24; it reads MVKSHIGSWLLVLFVATWSDIGFC. The interaction with ADGRG6 stretch occupies residues 25–41; it reads KKRPKPGGGWNTGGSRY. Residues 25–234 are interaction with GRB2, ERI3 and SYN1; sequence KKRPKPGGGW…ESEAYYQRGA (210 aa). A disordered region spans residues 27–114; sequence RPKPGGGWNT…KPSKPKTNMK (88 aa). 5 tandem repeats follow at residues 54-62, 63-70, 71-78, 79-86, and 87-95. The segment at 54-95 is 5 X 8 AA tandem repeats of P-H-G-G-G-W-G-Q; sequence PQGGGGWGQPHGGGWGQPHGGGWGQPHGGGWGQPHGGGGWGQ. Positions 55 to 101 are enriched in gly residues; it reads QGGGGWGQPHGGGWGQPHGGGWGQPHGGGWGQPHGGGGWGQGGGSHG. Positions 64, 65, 66, 72, 73, 74, 80, 81, 82, 88, 90, and 91 each coordinate Cu(2+). A disulfide bond links cysteine 183 and cysteine 218. 2 N-linked (GlcNAc...) asparagine glycosylation sites follow: asparagine 185 and asparagine 201. Residue alanine 234 is the site of GPI-anchor amidated alanine attachment. Residues 235–257 constitute a propeptide, removed in mature form; it reads SAILFSPPPVILLISLLILLIVG.

The protein belongs to the prion family. As to quaternary structure, monomer and homodimer. Has a tendency to aggregate into amyloid fibrils containing a cross-beta spine, formed by a steric zipper of superposed beta-strands. Soluble oligomers may represent an intermediate stage on the path to fibril formation. Copper binding may promote oligomerization. Interacts with GRB2, APP, ERI3/PRNPIP and SYN1. Mislocalized cytosolically exposed PrP interacts with MGRN1; this interaction alters MGRN1 subcellular location and causes lysosomal enlargement. Interacts with APP. Interacts with KIAA1191. Interacts with ADGRG6.

It is found in the cell membrane. It localises to the golgi apparatus. Its primary physiological function is unclear. May play a role in neuronal development and synaptic plasticity. May be required for neuronal myelin sheath maintenance. May promote myelin homeostasis through acting as an agonist for ADGRG6 receptor. May play a role in iron uptake and iron homeostasis. Soluble oligomers are toxic to cultured neuroblastoma cells and induce apoptosis (in vitro). Association with GPC1 (via its heparan sulfate chains) targets PRNP to lipid rafts. Also provides Cu(2+) or Zn(2+) for the ascorbate-mediated GPC1 deaminase degradation of its heparan sulfate side chains. This Neovison vison (American mink) protein is Major prion protein (PRNP).